The chain runs to 325 residues: Formimidoylglutamase (325 aa).

Mn(2+)-binding residues include histidine 130, aspartate 156, histidine 158, aspartate 160, cysteine 244, and aspartate 246.

The protein belongs to the arginase family. Mn(2+) is required as a cofactor.

The catalysed reaction is N-formimidoyl-L-glutamate + H2O = formamide + L-glutamate. It participates in amino-acid degradation; L-histidine degradation into L-glutamate; L-glutamate from N-formimidoyl-L-glutamate (hydrolase route): step 1/1. Functionally, catalyzes the conversion of N-formimidoyl-L-glutamate to L-glutamate and formamide. In Geobacillus sp. (strain WCH70), this protein is Formimidoylglutamase.